Here is a 380-residue protein sequence, read N- to C-terminus: MANLRKSHPLLKIANDALVDLPAPSNISVWWNFGSLLGLCLVTQIATGLFLAMHYTSDIATAFTSVAHICRDVNYGWLIRSIHANGASFFFICIYLHIGRGLYYGSYLYKETWTIGVVLLLLVMMTAFVGYVLPWGQMSFWGATVITNLLSAVPYVGGTLVQWIWGGFSVDNATLTRFFAFHFLFPFIIAAATVIHLLFLHETGSNNPTGLNSDSDKVPFHPYFTYKDLLGFAVLLTALASLALFSPNLLGDPDNFTPANPLVTPPHIKPEWYFLFAYAILRSIPNKLGGVLALLFSILVLMLVPFLHTSKQRSLMFRPVTQFLFWSLVADVMILTWIGGMPVEHPFVIIGQVASLIYFSLFLVLIPTAGLMENKILGWK.

4 consecutive transmembrane segments (helical) span residues 33–53, 77–98, 113–133, and 178–198; these read FGSL…FLAM, WLIR…YLHI, WTIG…GYVL, and FFAF…IHLL. Residues His-83 and His-97 each coordinate heme b. His-182 and His-196 together coordinate heme b. His-201 provides a ligand contact to a ubiquinone. Transmembrane regions (helical) follow at residues 226–246, 288–308, 320–340, and 347–367; these read YKDL…ALFS, LGGV…PFLH, VTQF…WIGG, and FVII…VLIP.

It belongs to the cytochrome b family. As to quaternary structure, the cytochrome bc1 complex contains 3 respiratory subunits (MT-CYB, CYC1 and UQCRFS1), 2 core proteins (UQCRC1 and UQCRC2) and probably 6 low-molecular weight proteins. Heme b serves as cofactor.

Its subcellular location is the mitochondrion inner membrane. Functionally, component of the ubiquinol-cytochrome c reductase complex (complex III or cytochrome b-c1 complex) that is part of the mitochondrial respiratory chain. The b-c1 complex mediates electron transfer from ubiquinol to cytochrome c. Contributes to the generation of a proton gradient across the mitochondrial membrane that is then used for ATP synthesis. This is Cytochrome b (mt-cyb) from Kareius bicoloratus (Stone flounder).